Consider the following 111-residue polypeptide: Large ribosomal subunit protein uL22 (111 aa).

The protein belongs to the universal ribosomal protein uL22 family. As to quaternary structure, part of the 50S ribosomal subunit.

This protein binds specifically to 23S rRNA; its binding is stimulated by other ribosomal proteins, e.g. L4, L17, and L20. It is important during the early stages of 50S assembly. It makes multiple contacts with different domains of the 23S rRNA in the assembled 50S subunit and ribosome. Its function is as follows. The globular domain of the protein is located near the polypeptide exit tunnel on the outside of the subunit, while an extended beta-hairpin is found that lines the wall of the exit tunnel in the center of the 70S ribosome. The sequence is that of Large ribosomal subunit protein uL22 from Clostridium novyi (strain NT).